The chain runs to 229 residues: MAKLTKKMKAIKAGVDSTKAYEINEALALLKQFATAKFNESVDVAVNLGIDPRKSDQNVRGATVLPHGTGRTVRVAVFTQGANAEAAKEAGADLIGMEDLAEQVKKGEMDFDVVIASPDAMRVVGQLGQILGPRGLMPNPKVGTVTPNVAEAVKNAKSGQVRYRNDKNGIIHTTIGKASFSEEQLKENLQALLAALAKARPTTAKGIFIKKVSVSTTQGAGVQVDQSSL.

This sequence belongs to the universal ribosomal protein uL1 family. Part of the 50S ribosomal subunit.

In terms of biological role, binds directly to 23S rRNA. The L1 stalk is quite mobile in the ribosome, and is involved in E site tRNA release. Protein L1 is also a translational repressor protein, it controls the translation of the L11 operon by binding to its mRNA. The sequence is that of Large ribosomal subunit protein uL1 from Actinobacillus succinogenes (strain ATCC 55618 / DSM 22257 / CCUG 43843 / 130Z).